A 380-amino-acid polypeptide reads, in one-letter code: Aminomethyltransferase (380 aa).

Belongs to the GcvT family. The glycine cleavage system is composed of four proteins: P, T, L and H.

It catalyses the reaction N(6)-[(R)-S(8)-aminomethyldihydrolipoyl]-L-lysyl-[protein] + (6S)-5,6,7,8-tetrahydrofolate = N(6)-[(R)-dihydrolipoyl]-L-lysyl-[protein] + (6R)-5,10-methylene-5,6,7,8-tetrahydrofolate + NH4(+). Its function is as follows. The glycine cleavage system catalyzes the degradation of glycine. This Koribacter versatilis (strain Ellin345) protein is Aminomethyltransferase.